A 281-amino-acid polypeptide reads, in one-letter code: 2-dehydro-3-deoxyphosphooctonate aldolase (281 aa).

This sequence belongs to the KdsA family.

It localises to the cytoplasm. It carries out the reaction D-arabinose 5-phosphate + phosphoenolpyruvate + H2O = 3-deoxy-alpha-D-manno-2-octulosonate-8-phosphate + phosphate. It participates in carbohydrate biosynthesis; 3-deoxy-D-manno-octulosonate biosynthesis; 3-deoxy-D-manno-octulosonate from D-ribulose 5-phosphate: step 2/3. Its pathway is bacterial outer membrane biogenesis; lipopolysaccharide biosynthesis. The polypeptide is 2-dehydro-3-deoxyphosphooctonate aldolase (Psychromonas ingrahamii (strain DSM 17664 / CCUG 51855 / 37)).